We begin with the raw amino-acid sequence, 938 residues long: Isoleucine--tRNA ligase (938 aa).

Residues 58 to 68 carry the 'HIGH' region motif; the sequence is PYANGSIHIGH. Lysine 183 carries the post-translational modification N6-acetyllysine. Glutamate 561 contacts L-isoleucyl-5'-AMP. The 'KMSKS' region motif lies at 602–606; the sequence is KMSKS. ATP is bound at residue lysine 605. 4 residues coordinate Zn(2+): cysteine 901, cysteine 904, cysteine 921, and cysteine 924.

Belongs to the class-I aminoacyl-tRNA synthetase family. IleS type 1 subfamily. In terms of assembly, monomer. Zn(2+) serves as cofactor.

It localises to the cytoplasm. It carries out the reaction tRNA(Ile) + L-isoleucine + ATP = L-isoleucyl-tRNA(Ile) + AMP + diphosphate. Its function is as follows. Catalyzes the attachment of isoleucine to tRNA(Ile). As IleRS can inadvertently accommodate and process structurally similar amino acids such as valine, to avoid such errors it has two additional distinct tRNA(Ile)-dependent editing activities. One activity is designated as 'pretransfer' editing and involves the hydrolysis of activated Val-AMP. The other activity is designated 'posttransfer' editing and involves deacylation of mischarged Val-tRNA(Ile). This is Isoleucine--tRNA ligase from Escherichia fergusonii (strain ATCC 35469 / DSM 13698 / CCUG 18766 / IAM 14443 / JCM 21226 / LMG 7866 / NBRC 102419 / NCTC 12128 / CDC 0568-73).